We begin with the raw amino-acid sequence, 570 residues long: Carotenoid cleavage dioxygenase 8, chloroplastic (570 aa).

The transit peptide at 1-56 (MASLITTKAMMSHHHVLSSTRITTLYSDNSIGDQQIKTKPQVPHRLFARRIFGVTR) directs the protein to the chloroplast. His-254, His-305, His-372, and His-563 together coordinate Fe cation.

Belongs to the carotenoid oxygenase family. It depends on Fe(2+) as a cofactor. Expressed in flowers, siliques, inflorescence stems, petiole and leaves, and at a much higher level in roots.

Its subcellular location is the plastid. The protein resides in the chloroplast. The catalysed reaction is 9-cis-10'-apo-beta-carotenal + 2 O2 = (2E,4E,6E)-7-hydroxy-4-methylhepta-2,4,6-trienal + (11R)-carlactone. It carries out the reaction all-trans-10'-apo-beta-carotenal + O2 = (2E,4E,6E)-4-methylocta-2,4,6-trienedial + 13-apo-beta-carotenone. Its function is as follows. Involved in strigolactones biosynthesis by cleaving the C(27) 9-cis-10'-apo-beta-carotenal produced by CCD7. Produces the C(19) carlactone and a C(8) hydroxyaldehyde. Also shows lower activity with all-trans-10'-apo-beta-carotenal producing a C(9) dialdehyde and the C(18) 13-apo-beta-carotenone. Strigolactones are hormones that inhibit tillering and shoot branching through the MAX-dependent pathway, contribute to the regulation of shoot architectural response to phosphate-limiting conditions and function as rhizosphere signal that stimulates hyphal branching of arbuscular mycorrhizal fungi and trigger seed germination of root parasitic weeds. Also active on other carotenoid substrates like licopene or zeaxanthin. This is Carotenoid cleavage dioxygenase 8, chloroplastic from Arabidopsis thaliana (Mouse-ear cress).